A 103-amino-acid chain; its full sequence is Matrix Gla protein (103 aa).

The first 19 residues, 1-19 (MKSLLLLSVLAALAVAALC), serve as a signal peptide directing secretion. Position 21 is a 4-carboxyglutamate (Glu-21). 3 positions are modified to phosphoserine: Ser-22, Ser-25, and Ser-28. A Gla domain is found at 51-97 (RAKAQERIRELNKPPYELNREACDDYKLCERYAMVYGYNAAYNRYFR). 4 positions are modified to 4-carboxyglutamate: Glu-56, Glu-60, Glu-67, and Glu-71. A disulfide bridge connects residues Cys-73 and Cys-79.

Belongs to the osteocalcin/matrix Gla protein family. Post-translationally, requires vitamin K-dependent gamma-carboxylation for its function.

It localises to the secreted. Associates with the organic matrix of bone and cartilage. Thought to act as an inhibitor of bone formation. The polypeptide is Matrix Gla protein (MGP) (Sus scrofa (Pig)).